A 424-amino-acid polypeptide reads, in one-letter code: E3 ubiquitin-protein ligase RNF26 (424 aa).

The next 5 membrane-spanning stretches (helical) occupy residues Leu24 to Tyr44, Gly60 to Leu80, Ile157 to Leu177, Val183 to Trp203, and Val224 to Val244. The RING-type zinc finger occupies Cys371–Arg413.

In terms of assembly, interacts with INCA1. Interacts with TMEM43, ENDOD1, TMEM33 and TMED1 to form a complex capable of modulating innate immune signaling through the cGAS-STING pathway. Interacts with UBE2J1; this interaction is important for SQSTM1 ubiquitination.

It localises to the endoplasmic reticulum membrane. It carries out the reaction S-ubiquitinyl-[E2 ubiquitin-conjugating enzyme]-L-cysteine + [acceptor protein]-L-lysine = [E2 ubiquitin-conjugating enzyme]-L-cysteine + N(6)-ubiquitinyl-[acceptor protein]-L-lysine.. It participates in protein modification; protein ubiquitination. E3 ubiquitin-protein ligase that plays a key role in endosome organization by retaining vesicles in the perinuclear cloud. Acts as a platform for perinuclear positioning of the endosomal system by mediating ubiquitination of SQSTM1 through interaction with the ubiquitin conjugating enzyme UBE2J1. Ubiquitinated SQSTM1 attracts specific vesicle-associated adapters, forming a molecular bridge that restrains cognate vesicles in the perinuclear region and organizes the endosomal pathway for efficient cargo transport. Also acts as a regulator of type I interferon production in response to viral infection by mediating the formation of 'Lys-11'-linked polyubiquitin chains on TMEM173/STING, leading to stabilize TMEM173/STING. Also required to limit type I interferon response by promoting autophagic degradation of IRF3. This Mus musculus (Mouse) protein is E3 ubiquitin-protein ligase RNF26.